The chain runs to 293 residues: AA9 family lytic polysaccharide monooxygenase E (293 aa).

Residues 1–19 form the signal peptide; that stretch reads MKGLLSVAALSLAVSEVSA. Cu(2+)-binding residues include histidine 20 and histidine 90. Cysteines 59 and 172 form a disulfide. Histidine 158 and glutamine 167 together coordinate O2. Tyrosine 169 contacts Cu(2+). The CBM1 domain maps to 257-293; it reads CAVAKWGQCGGNGWTGCTTCAAGSTCNTQNAYYHQCV.

Belongs to the polysaccharide monooxygenase AA9 family. Cu(2+) is required as a cofactor.

It is found in the secreted. It catalyses the reaction [(1-&gt;4)-beta-D-glucosyl]n+m + reduced acceptor + O2 = 4-dehydro-beta-D-glucosyl-[(1-&gt;4)-beta-D-glucosyl]n-1 + [(1-&gt;4)-beta-D-glucosyl]m + acceptor + H2O.. Glucose dehydrogenase and aryl-alcohol quinone oxidoreductases regulate the oxidative degradation of cellulose since they can act as catalytically efficient electron donors for LPMO9E. In terms of biological role, lytic polysaccharide monooxygenase (LPMO) that depolymerizes crystalline and amorphous polysaccharides via the oxidation of scissile alpha- or beta-(1-4)-glycosidic bonds, yielding only C1 oxidation products. Catalysis by LPMOs requires the reduction of the active-site copper from Cu(II) to Cu(I) by a reducing agent and H(2)O(2) or O(2) as a cosubstrate. Improves the progression of lytic enzymes in delignified miscanthus cell walls. This boosting effect dependents on the cellular type which indicates contrasted recalcitrance levels in plant tissues. The protein is AA9 family lytic polysaccharide monooxygenase E of Podospora anserina (strain S / ATCC MYA-4624 / DSM 980 / FGSC 10383) (Pleurage anserina).